A 141-amino-acid chain; its full sequence is MAKKVSAKIKLALPAGKANPAPPVGPALGQHGVNIMMFCKEYNARTADQVGMVIPVEITVFEDRSFTFVLKTPPASVLLTKAAGVEKGSGKPNKEKAGTITGAQLRQIAEQKLPDLNANDVEAAMKIIAGTARNMGIVIAD.

Belongs to the universal ribosomal protein uL11 family. In terms of assembly, part of the ribosomal stalk of the 50S ribosomal subunit. Interacts with L10 and the large rRNA to form the base of the stalk. L10 forms an elongated spine to which L12 dimers bind in a sequential fashion forming a multimeric L10(L12)X complex. One or more lysine residues are methylated.

Forms part of the ribosomal stalk which helps the ribosome interact with GTP-bound translation factors. In Gloeobacter violaceus (strain ATCC 29082 / PCC 7421), this protein is Large ribosomal subunit protein uL11.